A 176-amino-acid chain; its full sequence is PRL-1 phosphatase (176 aa).

Residues 13–166 enclose the Tyrosine-protein phosphatase domain; that stretch reads APALIEYKGM…YKPKARLKHK (154 aa). Catalysis depends on cysteine 109, which acts as the Phosphocysteine intermediate. The residue at position 173 (cysteine 173) is a Cysteine methyl ester. Residue cysteine 173 is the site of S-farnesyl cysteine attachment. Positions 174 to 176 are cleaved as a propeptide — removed in mature form; sequence SVQ.

The protein belongs to the protein-tyrosine phosphatase family. Homotrimer. Interacts with uex, possibly at the plasma membrane. In terms of tissue distribution, expressed in the adult head (at protein level). Expressed in neurons in the antennal lobe and V-glomeruli (at protein level). Expressed in dorsocentral neurons (at protein level).

Its subcellular location is the cytoplasm. It is found in the cell membrane. The protein localises to the apicolateral cell membrane. The protein resides in the cell projection. It localises to the axon. It catalyses the reaction O-phospho-L-tyrosyl-[protein] + H2O = L-tyrosyl-[protein] + phosphate. Probable phosphatase. Inhibits growth possibly by negatively regulating Src64B-induced growth. Regulates central nervous system circuit formation and stabilization of synapse-dense terminal arbors. In dorsocentral neurons, regulates synaptogenesis in terminal arbors via modulation of the insulin receptor pathway, likely upstream of Akt1, and via reduction of PtdIns(4,5)P2 (Phosphatidylinositol 4,5-bisphosphate) levels. In the nervous system, plays a protective role together with uex in response to olfactory carbon dioxide stimulation. This is PRL-1 phosphatase from Drosophila melanogaster (Fruit fly).